A 129-amino-acid chain; its full sequence is D-ribose pyranase (129 aa).

H20 functions as the Proton donor in the catalytic mechanism. Substrate is bound by residues D28, H96, and 118-120 (YAN).

This sequence belongs to the RbsD / FucU family. RbsD subfamily. In terms of assembly, homodecamer.

It localises to the cytoplasm. It carries out the reaction beta-D-ribopyranose = beta-D-ribofuranose. Its pathway is carbohydrate metabolism; D-ribose degradation; D-ribose 5-phosphate from beta-D-ribopyranose: step 1/2. Functionally, catalyzes the interconversion of beta-pyran and beta-furan forms of D-ribose. The protein is D-ribose pyranase of Halalkalibacterium halodurans (strain ATCC BAA-125 / DSM 18197 / FERM 7344 / JCM 9153 / C-125) (Bacillus halodurans).